Reading from the N-terminus, the 735-residue chain is Peroxisomal multifunctional enzyme type 2 (735 aa).

The interval 1–305 (MASPLRFDGR…VEVLHKVDSE (305 aa)) is (3R)-hydroxyacyl-CoA dehydrogenase. NAD(+) is bound by residues 13 to 37 (LVTG…ALVI), Leu21, and Asp40. Lys46 carries the post-translational modification N6-acetyllysine; alternate. The residue at position 46 (Lys46) is an N6-succinyllysine; alternate. Ser52 is modified (phosphoserine). 2 positions are modified to N6-succinyllysine: Lys57 and Lys68. Position 75 to 76 (75 to 76 (SV)) interacts with NAD(+). Lys84 carries the post-translational modification N6-succinyllysine. Asn99 is a binding site for NAD(+). Residue Ser151 participates in substrate binding. Tyr164 (proton acceptor) is an active-site residue. Residues 164 to 168 (YSAAK) and 196 to 199 (AGSR) each bind NAD(+). Thr265 carries the post-translational modification Phosphothreonine. An N6-succinyllysine modification is found at Lys275. Phosphoserine is present on residues Ser304 and Ser308. The interval 321–621 (SGFVGAVGHK…TQTPSEGGEL (301 aa)) is enoyl-CoA hydratase 2. Lys355 is subject to N6-succinyllysine. Position 405–406 (405–406 (HG)) interacts with (3R)-3-hydroxydecanoyl-CoA. Residue Lys423 is modified to N6-succinyllysine. Residues Lys434, 509-514 (DWNPLH), Gly532, and Phe562 contribute to the (3R)-3-hydroxydecanoyl-CoA site. Residues 483–599 (VPNRPPDAVL…HETGDVVISN (117 aa)) enclose the MaoC-like domain. Lys564 is subject to N6-acetyllysine. Residues Lys578 and Lys662 each carry the N6-succinyllysine modification. The 113-residue stretch at 623-735 (SALVFGEIGR…QMILKDYAKL (113 aa)) folds into the SCP2 domain. At Lys668 the chain carries N6-acetyllysine. Residue Gln705 participates in substrate binding. An N6-acetyllysine modification is found at Lys706. Gln723 provides a ligand contact to substrate. Lys724 bears the N6-succinyllysine mark. The Microbody targeting signal motif lies at 733-735 (AKL).

This sequence belongs to the short-chain dehydrogenases/reductases (SDR) family. Homodimer. In terms of tissue distribution, present in many tissues with highest concentrations in liver and kidney.

It is found in the peroxisome. The catalysed reaction is a (3R)-3-hydroxyacyl-CoA + NAD(+) = a 3-oxoacyl-CoA + NADH + H(+). It carries out the reaction (24R,25R)-3alpha,7alpha,12alpha,24-tetrahydroxy-5beta-cholestan-26-oyl-CoA = (24E)-3alpha,7alpha,12alpha-trihydroxy-5beta-cholest-24-en-26-oyl-CoA + H2O. It catalyses the reaction a (3R)-3-hydroxyacyl-CoA = a (2E)-enoyl-CoA + H2O. The enzyme catalyses (2E)-octenoyl-CoA + H2O = (3R)-hydroxyoctanoyl-CoA. The catalysed reaction is (3R)-hydroxyoctanoyl-CoA + NAD(+) = 3-oxooctanoyl-CoA + NADH + H(+). It carries out the reaction (3R)-hydroxyhexadecanoyl-CoA + NAD(+) = 3-oxohexadecanoyl-CoA + NADH + H(+). It catalyses the reaction (2E)-hexadecenedioyl-CoA + H2O = (3R)-hydroxyhexadecanedioyl-CoA. The enzyme catalyses (3R)-hydroxyhexadecanedioyl-CoA + NAD(+) = 3-oxohexadecanedioyl-CoA + NADH + H(+). The catalysed reaction is (3R)-hydroxyhexadecanoyl-CoA = (2E)-hexadecenoyl-CoA + H2O. It carries out the reaction (3R)-3-hydroxydecanoyl-CoA = (2E)-decenoyl-CoA + H2O. It catalyses the reaction (3R)-3-hydroxydecanoyl-CoA + NAD(+) = 3-oxodecanoyl-CoA + NADH + H(+). The enzyme catalyses (24R,25R)-3alpha,7alpha,12alpha,24-tetrahydroxy-5beta-cholestan-26-oyl-CoA + NAD(+) = 3alpha,7alpha,12alpha-trihydroxy-24-oxo-5beta-cholestan-26-oyl-CoA + NADH + H(+). Its pathway is lipid metabolism; fatty acid beta-oxidation. Functionally, bifunctional enzyme acting on the peroxisomal fatty acid beta-oxidation pathway. Catalyzes two of the four reactions in fatty acid degradation: hydration of 2-enoyl-CoA (trans-2-enoyl-CoA) to produce (3R)-3-hydroxyacyl-CoA, and dehydrogenation of (3R)-3-hydroxyacyl-CoA to produce 3-ketoacyl-CoA (3-oxoacyl-CoA), which is further metabolized by SCPx. Can use straight-chain and branched-chain fatty acids, as well as bile acid intermediates as substrates. The chain is Peroxisomal multifunctional enzyme type 2 from Mus musculus (Mouse).